Reading from the N-terminus, the 785-residue chain is E3 UFM1-protein ligase 1 homolog (785 aa).

The disordered stretch occupies residues 405–483; sequence ASFQDQDDDG…GGGGGNKKTV (79 aa).

Belongs to the UFL1 family.

E3 UFM1-protein ligase that mediates ufmylation of target proteins. The chain is E3 UFM1-protein ligase 1 homolog from Drosophila pseudoobscura pseudoobscura (Fruit fly).